A 551-amino-acid polypeptide reads, in one-letter code: Glucose-6-phosphate isomerase (551 aa).

Glu-349 (proton donor) is an active-site residue. Active-site residues include His-378 and Lys-480.

This sequence belongs to the GPI family.

The protein resides in the cytoplasm. The catalysed reaction is alpha-D-glucose 6-phosphate = beta-D-fructose 6-phosphate. Its pathway is carbohydrate biosynthesis; gluconeogenesis. It functions in the pathway carbohydrate degradation; glycolysis; D-glyceraldehyde 3-phosphate and glycerone phosphate from D-glucose: step 2/4. Functionally, catalyzes the reversible isomerization of glucose-6-phosphate to fructose-6-phosphate. The protein is Glucose-6-phosphate isomerase of Prochlorococcus marinus (strain MIT 9313).